The sequence spans 147 residues: Large ribosomal subunit protein uL15 (147 aa).

The disordered stretch occupies residues 1-58 (MKLFELKPAPGAKKRPKRVGRGESSGHGKTSTRGHKGQWARSGGGVRPGFEGGQMPLT). Positions 42–52 (SGGGVRPGFEG) are enriched in gly residues.

It belongs to the universal ribosomal protein uL15 family. In terms of assembly, part of the 50S ribosomal subunit.

Binds to the 23S rRNA. The chain is Large ribosomal subunit protein uL15 from Caldicellulosiruptor saccharolyticus (strain ATCC 43494 / DSM 8903 / Tp8T 6331).